The sequence spans 633 residues: Opioid growth factor receptor (633 aa).

At Met1 the chain carries N-acetylmethionine. The segment covering 1–38 (MDDPECDSTWEDESEEDGEDGQADDTTDEDTGDDDGDA) has biased composition (acidic residues). The disordered stretch occupies residues 1 to 44 (MDDPECDSTWEDESEEDGEDGQADDTTDEDTGDDDGDAEEARPS). A Bipartite nuclear localization signal motif is present at residues 257–286 (RRELVHFAWEHFKPRREFVWGPRDKLRRFR). Residues 287-390 (PQTISRPLMG…EPDPQGVSEV (104 aa)) are disordered. 6 positions are modified to phosphoserine: Ser327, Ser340, Ser361, Ser365, Ser403, and Ser452. Over residues 351–374 (GDQRHEAKSPSPKESKKRKLEGNR) the composition is skewed to basic and acidic residues. The segment at 404 to 633 (PTSQEPREAE…IEASVEPPKP (230 aa)) is disordered. A compositionally biased stretch (polar residues) spans 441 to 455 (ASNTQVQASALSPTP). Repeat copies occupy residues 467–475 (GPEDPKSQV), 476–484 (GPEDPKSQV), 485–493 (GPEDPKSQV), 494–502 (GPEDPKSQV), 503–511 (GPEDPKGQV), 512–520 (EPEDPKGQV), 521–529 (GPEDPKGQV), 530–538 (GPEDPKGQV), 539–547 (GPEDPKSQV), 548–556 (GPEDPKSQV), 557–565 (EPEDPKSQV), 566–574 (EPEDPKSQV), 575–583 (EPEDPKSQV), and 584–592 (GPEDPQSQV). Residues 467-592 (GPEDPKSQVG…VGPEDPQSQV (126 aa)) are 14 X approximate tandem repeats. Basic and acidic residues predominate over residues 505-517 (EDPKGQVEPEDPK). The segment covering 550-580 (EDPKSQVEPEDPKSQVEPEDPKSQVEPEDPK) has biased composition (basic and acidic residues). 2 positions are modified to phosphoserine: Ser601 and Ser608.

It belongs to the opioid growth factor receptor family. Expressed in all tissues examined, including brain, heart, lung, liver, kidney and skeletal muscle.

Its subcellular location is the cytoplasm. The protein localises to the nucleus. Functionally, receptor for opioid growth factor (OGF), also known as Met-enkephalin. Seems to be involved in growth regulation. The protein is Opioid growth factor receptor (Ogfr) of Mus musculus (Mouse).